A 367-amino-acid polypeptide reads, in one-letter code: Uracil nucleotide/cysteinyl leukotriene receptor (367 aa).

A disordered region spans residues Met-1–Ser-28. Topologically, residues Met-1 to Ser-64 are extracellular. N-linked (GlcNAc...) asparagine glycosylation occurs at Asn-42. A helical transmembrane segment spans residues Phe-65–Ile-85. The Cytoplasmic segment spans residues Arg-86–Thr-92. Residues Pro-93–Pro-113 form a helical membrane-spanning segment. Topologically, residues Thr-114–Arg-133 are extracellular. Cys-132 and Cys-209 are oxidised to a cystine. The chain crosses the membrane as a helical span at residues Leu-134–Ser-154. Over Ala-155 to Tyr-175 the chain is Cytoplasmic. A helical transmembrane segment spans residues Ala-176–Val-196. Topologically, residues Ser-197–Val-223 are extracellular. The N-linked (GlcNAc...) asparagine glycan is linked to Asn-204. Residues Ser-224–Ile-244 form a helical membrane-spanning segment. The Cytoplasmic segment spans residues Arg-245–Lys-260. A helical transmembrane segment spans residues Ala-261–Val-281. Asn-282 carries an N-linked (GlcNAc...) asparagine glycan. Topologically, residues Asn-282–Arg-308 are extracellular. The helical transmembrane segment at Ile-309–Ala-329 threads the bilayer. Over Glu-330–Leu-367 the chain is Cytoplasmic.

It belongs to the G-protein coupled receptor 1 family. Expressed in brain, kidney, heart and umbilical vein endothelial cells. Highest level in brain.

It localises to the cell membrane. In terms of biological role, dual specificity receptor for uracil nucleotides and cysteinyl leukotrienes (CysLTs). Signals through G(i) and inhibition of adenylyl cyclase. May mediate brain damage by nucleotides and CysLTs following ischemia. This Homo sapiens (Human) protein is Uracil nucleotide/cysteinyl leukotriene receptor (GPR17).